Here is a 216-residue protein sequence, read N- to C-terminus: Ras-related protein Rab-11A (216 aa).

The residue at position 2 (Gly-2) is an N-acetylglycine. GTP contacts are provided by Ser-20, Gly-21, Val-22, Gly-23, Lys-24, Ser-25, Asn-26, Asn-37, Leu-38, Ser-40, Ser-42, and Thr-43. A Mg(2+)-binding site is contributed by Ser-25. Residues 36–47 carry the Switch 1 motif; that stretch reads FNLESKSTIGVE. Mg(2+) contacts are provided by Thr-43 and Asp-66. Residues 67–86 carry the Switch 2 motif; sequence TAGQERYRAITSAYYRGAVG. Residues Gly-69, Asn-124, Lys-125, Asp-127, Ala-155, and Leu-156 each coordinate GTP. The disordered stretch occupies residues 183-211; the sequence is DRRENDMSPSNNVVPIHVPPTTENKPKVQ. S-geranylgeranyl cysteine attachment occurs at residues Cys-212 and Cys-213. A Cysteine methyl ester modification is found at Cys-213. Positions 214 to 216 are cleaved as a propeptide — removed in mature form; sequence QNI.

This sequence belongs to the small GTPase superfamily. Rab family. In terms of assembly, interacts (GTP-bound form) with RAB11FIPs (via their C-termini) including RAB11FIP1, RAB11FIP2, RAB11FIP3, RAB11FIP4 and RAB11FIP5 effectors. Forms a complex with RAB11FIP3 and dynein intermediate chain DYNC1LI1; the interaction between RAB11A1 and RAB11FIP3 is direct; the complex regulates endocytic trafficking. Interacts with EVI5; EVI5 and RAB11FIP3 may be mutually exclusive and compete for binding RAB11A. Interacts with SGSM1, SGSM2, SGSM3 and VIPAS39. Interacts with EXOC6 in a GTP-dependent manner. Interacts with RAB11FIP5. Interacts with STXBP6. Interacts (GDP-bound form) with ZFYVE27. Interacts with BIRC6/bruce. May interact with TBC1D14. Interacts with UNC119; in a cell cycle-dependent manner. GDP-bound and nucleotide-free forms interact with SH3BP5. Interacts (GDP-bound form) with KIF5A in a ZFYVE27-dependent manner. Interacts (GDP-bound form) with RELCH. Found in a complex composed of RELCH, OSBP1 and RAB11A. Interacts with TBC1D12. Interacts with DEF6. Interacts with ATP9A. Forms a heterotetramer with RAB11FIP3; the GTP-bound form is preferred for binding. Forms a complex with Rabin8/RAB3IP and RAB11FIP3, probably a heterohexamer with two of each protein subunit, where Rabin8/RAB3IP and RAB11FIP3 simultaneously bind to RAB11A; the complex promotes preciliary trafficking and cilia growth. Forms a complex containing RAB11A, ASAP1, Rabin8/RAB3IP, RAP11FIP3 and ARF4; the complex promotes preciliary trafficking; the complex binds to RHO in photoreceptor cells and promotes RHO ciliary transport. Interacts (GTP-bound form) with WDR44; the interaction prevents RAB11A-RAB3IP-RAB11FIP3 complex formation. It depends on Mg(2+) as a cofactor. As to expression, detected in various tissues, such as brain, testis, spleen, and heart.

Its subcellular location is the cell membrane. The protein resides in the endosome membrane. It localises to the recycling endosome membrane. The protein localises to the cleavage furrow. It is found in the cytoplasmic vesicle. Its subcellular location is the phagosome. The protein resides in the cytoplasmic vesicle membrane. It localises to the golgi apparatus. The protein localises to the trans-Golgi network. It catalyses the reaction GTP + H2O = GDP + phosphate + H(+). With respect to regulation, regulated by guanine nucleotide exchange factors (GEFs) which promote the exchange of bound GDP for free GTP. Regulated by GTPase activating proteins (GAPs) which increase the GTP hydrolysis activity. Inhibited by GDP dissociation inhibitors (GDIs) which prevent Rab-GDP dissociation. Functionally, the small GTPases Rab are key regulators of intracellular membrane trafficking, from the formation of transport vesicles to their fusion with membranes. Rabs cycle between an inactive GDP-bound form and an active GTP-bound form that is able to recruit to membranes different set of downstream effectors directly responsible for vesicle formation, movement, tethering and fusion. The small Rab GTPase RAB11A regulates endocytic recycling. Forms a functional Rab11/RAB11FIP3/dynein complex that regulates the movement of peripheral sorting endosomes (SE) along microtubule tracks toward the microtubule organizing center/centrosome, generating the endosomal recycling compartment (ERC). Acts as a major regulator of membrane delivery during cytokinesis. Together with MYO5B and RAB8A participates in epithelial cell polarization. Together with Rabin8/RAB3IP, RAB8A, the exocyst complex, PARD3, PRKCI, ANXA2, CDC42 and DNMBP promotes transcytosis of PODXL to the apical membrane initiation sites (AMIS), apical surface formation and lumenogenesis. Together with MYO5B participates in CFTR trafficking to the plasma membrane and TF (Transferrin) recycling in nonpolarized cells. Required in a complex with MYO5B and RAB11FIP2 for the transport of NPC1L1 to the plasma membrane. Participates in the sorting and basolateral transport of CDH1 from the Golgi apparatus to the plasma membrane. Regulates the recycling of FCGRT (receptor of Fc region of monomeric IgG) to basolateral membranes. May also play a role in melanosome transport and release from melanocytes. Promotes Rabin8/RAB3IP preciliary vesicular trafficking to mother centriole by forming a ciliary targeting complex containing Rab11, ASAP1, Rabin8/RAB3IP, RAB11FIP3 and ARF4, thereby regulating ciliogenesis initiation. On the contrary, upon LPAR1 receptor signaling pathway activation, interaction with phosphorylated WDR44 prevents Rab11-RAB3IP-RAB11FIP3 complex formation and cilia growth. Participates in the export of a subset of neosynthesized proteins through a Rab8-Rab10-Rab11-endososomal dependent export route via interaction with WDR44. This chain is Ras-related protein Rab-11A, found in Rattus norvegicus (Rat).